The primary structure comprises 201 residues: Large ribosomal subunit protein uL4 (201 aa).

Residues 42–67 (GNSAQKTRSEVSGGGKKPWNQKGTGR) are disordered.

Belongs to the universal ribosomal protein uL4 family. As to quaternary structure, part of the 50S ribosomal subunit.

One of the primary rRNA binding proteins, this protein initially binds near the 5'-end of the 23S rRNA. It is important during the early stages of 50S assembly. It makes multiple contacts with different domains of the 23S rRNA in the assembled 50S subunit and ribosome. In terms of biological role, forms part of the polypeptide exit tunnel. This is Large ribosomal subunit protein uL4 from Legionella pneumophila (strain Lens).